Consider the following 272-residue polypeptide: tRNA uridine(34) hydroxylase (272 aa).

The Rhodanese domain maps to serine 121 to asparagine 217. Residue cysteine 177 is the Cysteine persulfide intermediate of the active site.

This sequence belongs to the TrhO family.

The catalysed reaction is uridine(34) in tRNA + AH2 + O2 = 5-hydroxyuridine(34) in tRNA + A + H2O. Its function is as follows. Catalyzes oxygen-dependent 5-hydroxyuridine (ho5U) modification at position 34 in tRNAs. The chain is tRNA uridine(34) hydroxylase from Ehrlichia ruminantium (strain Welgevonden).